A 128-amino-acid chain; its full sequence is Large ribosomal subunit protein uL22 (128 aa).

Belongs to the universal ribosomal protein uL22 family. Part of the 50S ribosomal subunit.

Its function is as follows. This protein binds specifically to 23S rRNA; its binding is stimulated by other ribosomal proteins, e.g. L4, L17, and L20. It is important during the early stages of 50S assembly. It makes multiple contacts with different domains of the 23S rRNA in the assembled 50S subunit and ribosome. In terms of biological role, the globular domain of the protein is located near the polypeptide exit tunnel on the outside of the subunit, while an extended beta-hairpin is found that lines the wall of the exit tunnel in the center of the 70S ribosome. The chain is Large ribosomal subunit protein uL22 from Methylocella silvestris (strain DSM 15510 / CIP 108128 / LMG 27833 / NCIMB 13906 / BL2).